The primary structure comprises 197 residues: Small ribosomal subunit protein uS4c (197 aa).

One can recognise an S4 RNA-binding domain in the interval 85–157 (MRLDNILFRL…LQLFTGKELA (73 aa)).

This sequence belongs to the universal ribosomal protein uS4 family. Part of the 30S ribosomal subunit. Contacts protein S5. The interaction surface between S4 and S5 is involved in control of translational fidelity.

It is found in the plastid. Its function is as follows. One of the primary rRNA binding proteins, it binds directly to 16S rRNA where it nucleates assembly of the body of the 30S subunit. Functionally, with S5 and S12 plays an important role in translational accuracy. The sequence is that of Small ribosomal subunit protein uS4c (rps4) from Cuscuta gronovii (Common dodder).